A 180-amino-acid chain; its full sequence is Crossover junction endodeoxyribonuclease RuvC (180 aa).

Active-site residues include D9, E74, and D146. Residues D9, E74, and D146 each coordinate Mg(2+).

It belongs to the RuvC family. As to quaternary structure, homodimer which binds Holliday junction (HJ) DNA. The HJ becomes 2-fold symmetrical on binding to RuvC with unstacked arms; it has a different conformation from HJ DNA in complex with RuvA. In the full resolvosome a probable DNA-RuvA(4)-RuvB(12)-RuvC(2) complex forms which resolves the HJ. It depends on Mg(2+) as a cofactor.

It is found in the cytoplasm. It catalyses the reaction Endonucleolytic cleavage at a junction such as a reciprocal single-stranded crossover between two homologous DNA duplexes (Holliday junction).. Functionally, the RuvA-RuvB-RuvC complex processes Holliday junction (HJ) DNA during genetic recombination and DNA repair. Endonuclease that resolves HJ intermediates. Cleaves cruciform DNA by making single-stranded nicks across the HJ at symmetrical positions within the homologous arms, yielding a 5'-phosphate and a 3'-hydroxyl group; requires a central core of homology in the junction. The consensus cleavage sequence is 5'-(A/T)TT(C/G)-3'. Cleavage occurs on the 3'-side of the TT dinucleotide at the point of strand exchange. HJ branch migration catalyzed by RuvA-RuvB allows RuvC to scan DNA until it finds its consensus sequence, where it cleaves and resolves the cruciform DNA. The protein is Crossover junction endodeoxyribonuclease RuvC of Methylobacillus flagellatus (strain ATCC 51484 / DSM 6875 / VKM B-1610 / KT).